Reading from the N-terminus, the 131-residue chain is Small ribosomal subunit protein uS11 (131 aa).

It belongs to the universal ribosomal protein uS11 family. As to quaternary structure, part of the 30S ribosomal subunit. Interacts with proteins S7 and S18. Binds to IF-3.

Located on the platform of the 30S subunit, it bridges several disparate RNA helices of the 16S rRNA. Forms part of the Shine-Dalgarno cleft in the 70S ribosome. The sequence is that of Small ribosomal subunit protein uS11 from Helicobacter pylori (strain P12).